Here is a 177-residue protein sequence, read N- to C-terminus: Thymidine kinase (177 aa).

Glycine 11 to serine 18 contacts ATP. Residue glutamate 83 is the Proton acceptor of the active site. Position 113 (phenylalanine 113) interacts with substrate. Residues cysteine 138 and cysteine 141 each coordinate Zn(2+). A substrate-binding site is contributed by isoleucine 157–glycine 161. 2 residues coordinate Zn(2+): cysteine 170 and cysteine 173.

Belongs to the thymidine kinase family. As to quaternary structure, homotetramer. Two molecules of substrate bind to each enzyme tetramer.

It carries out the reaction thymidine + ATP = dTMP + ADP + H(+). Functionally, phosphorylates thymidine and thymidine analogs, such as azidothymidine (AZT). Part of the salvage pathway for pyrimidine deoxyribonucleotide synthesis. This Variola virus (isolate Human/India/Ind3/1967) (VARV) protein is Thymidine kinase (OPG101).